The following is a 306-amino-acid chain: Methyl-CpG-binding domain-containing protein 7 (306 aa).

Residues 1 to 11 (MQTRSSSSPSA) are compositionally biased toward polar residues. The segment at 1-21 (MQTRSSSSPSANHRRETQLQI) is disordered. MBD domains lie at 21–92 (IADP…QDKT), 106–171 (GVEY…RVLQ), and 172–242 (NRRG…ERLP). An asymmetric dimethylarginine mark is found at Arg-118, Arg-145, and Arg-174. Positions 163 to 306 (IEQQLRVLQN…AFVSLIEDRS (144 aa)) are required for interaction with PRMT11.

Interacts with PRMT11. Interacts (via C-terminus) with IDM2, but not with IDM1. Interacts with IDM3. Part of a complex made of MBD7, IDM1, IDM2 and IDM3. In terms of processing, methylated by PRMT11. In terms of tissue distribution, expressed in leaves, buds, flowers, stems, siliques, mature seeds and roots.

Its subcellular location is the nucleus. The protein resides in the chromosome. Its function is as follows. Transcriptional regulator that binds CpG islands in promoters where the DNA is methylated at position 5 of cytosine within CpG dinucleotides. May directly affect chromatin structure by inducing intra- and inter- chromatin compaction via bridging over multiple methylated CpG sites. Acts as an anti-silencing factor that prevents DNA hypermethylation and gene repression. Requires high mCG density for binding. Recognizes preferentially mCGs located in transposable elements. Required for active DNA demethylation. Prefers to target genomic loci around chromocenters. This Arabidopsis thaliana (Mouse-ear cress) protein is Methyl-CpG-binding domain-containing protein 7.